The sequence spans 436 residues: Enolase (436 aa).

The substrate site is built by His159 and Glu168. Glu211 serves as the catalytic Proton donor. Mg(2+) is bound by residues Asp246, Glu295, and Asp320. Substrate-binding residues include Glu295 and Asp320. Lys345 serves as the catalytic Proton acceptor. Residues 372 to 375 (SHRS) and Lys396 contribute to the substrate site.

It belongs to the enolase family. Homodimer. Mg(2+) is required as a cofactor.

Its subcellular location is the cytoplasm. It carries out the reaction (2R)-2-phosphoglycerate = phosphoenolpyruvate + H2O. Its pathway is carbohydrate degradation; glycolysis; pyruvate from D-glyceraldehyde 3-phosphate: step 4/5. This is Enolase from Cunninghamella elegans.